The sequence spans 335 residues: Anthranilate phosphoribosyltransferase (335 aa).

Residues glycine 79, 82 to 83 (GD), threonine 87, 89 to 92 (NIST), 107 to 115 (KHCNQGVSS), and serine 119 contribute to the 5-phospho-alpha-D-ribose 1-diphosphate site. Glycine 79 lines the anthranilate pocket. A Mg(2+)-binding site is contributed by serine 91. Asparagine 110 provides a ligand contact to anthranilate. Arginine 165 contacts anthranilate. Positions 223 and 224 each coordinate Mg(2+).

It belongs to the anthranilate phosphoribosyltransferase family. In terms of assembly, homodimer. Mg(2+) is required as a cofactor.

The catalysed reaction is N-(5-phospho-beta-D-ribosyl)anthranilate + diphosphate = 5-phospho-alpha-D-ribose 1-diphosphate + anthranilate. The protein operates within amino-acid biosynthesis; L-tryptophan biosynthesis; L-tryptophan from chorismate: step 2/5. Its function is as follows. Catalyzes the transfer of the phosphoribosyl group of 5-phosphorylribose-1-pyrophosphate (PRPP) to anthranilate to yield N-(5'-phosphoribosyl)-anthranilate (PRA). The chain is Anthranilate phosphoribosyltransferase from Buchnera aphidicola subsp. Diuraphis noxia.